Consider the following 377-residue polypeptide: Homocitrate synthase 1 (377 aa).

The Pyruvate carboxyltransferase domain maps to 4–255; it reads VLINDTTLRD…DMGIDTPRLL (252 aa).

It belongs to the alpha-IPM synthase/homocitrate synthase family.

The catalysed reaction is acetyl-CoA + 2-oxoglutarate + H2O = (2R)-homocitrate + CoA + H(+). In terms of biological role, this protein is a Fe-Mo-cofactor biosynthetic component. The chain is Homocitrate synthase 1 (nifV1) from Nostoc sp. (strain PCC 7120 / SAG 25.82 / UTEX 2576).